The chain runs to 23 residues: Coenzyme PQQ synthesis protein A (23 aa).

Residues 15-19 (EVTMY) constitute a cross-link (pyrroloquinoline quinone (Glu-Tyr)).

It belongs to the PqqA family.

It functions in the pathway cofactor biosynthesis; pyrroloquinoline quinone biosynthesis. In terms of biological role, required for coenzyme pyrroloquinoline quinone (PQQ) biosynthesis. PQQ is probably formed by cross-linking a specific glutamate to a specific tyrosine residue and excising these residues from the peptide. The polypeptide is Coenzyme PQQ synthesis protein A (Ectopseudomonas mendocina (strain ymp) (Pseudomonas mendocina)).